A 202-amino-acid chain; its full sequence is Neurensin-2 (202 aa).

A run of 2 helical transmembrane segments spans residues 65-85 (VAVASLFLLLGVAALTTGYAV) and 116-136 (VVGATLCGVAGIMLAVCLFLI). The interval 162–202 (RDEPEKLSPAFHETSSQSPFLTPPSPFGQQSVQTSQPQRDL) is disordered. Residues 188–202 (FGQQSVQTSQPQRDL) are compositionally biased toward polar residues.

This sequence belongs to the VMP family. Expressed specifically in brain where it is widely expressed, with highest levels of expression in thalamus and hypothalamus. In brain, found in neural cell bodies and detected in many regions of the limbic system, such as the septum nucleus, horizontal and vertical limbs of the diagonal band, hippocampus, amygdaloid nucleus, and habernula nucleus. Also localizes to small vesicles found in the perinuclear region of Neuro2a and PC12 cells.

It is found in the membrane. May play a role in maintenance and/or transport of vesicles. The polypeptide is Neurensin-2 (Mus musculus (Mouse)).